We begin with the raw amino-acid sequence, 609 residues long: Proteasome-associated ATPase (609 aa).

Residues 1-24 are disordered; that stretch reads MGESERSEAFGIPRDSPLSSGDAA. The stretch at 20–96 forms a coiled coil; it reads SGDAAELEQL…LREEVDRLGQ (77 aa). 296–301 lines the ATP pocket; it reads GCGKTL. The interval 608–609 is docks into pockets in the proteasome alpha-ring; sequence YL.

Belongs to the AAA ATPase family. Homohexamer. Assembles into a hexameric ring structure that caps the 20S proteasome core. Strongly interacts with the prokaryotic ubiquitin-like protein Pup through a hydrophobic interface; the interacting region of ARC lies in its N-terminal coiled-coil domain. There is one Pup binding site per ARC hexamer ring. Upon ATP-binding, the C-terminus of ARC interacts with the alpha-rings of the proteasome core, possibly by binding to the intersubunit pockets.

Its pathway is protein degradation; proteasomal Pup-dependent pathway. ATPase which is responsible for recognizing, binding, unfolding and translocation of pupylated proteins into the bacterial 20S proteasome core particle. May be essential for opening the gate of the 20S proteasome via an interaction with its C-terminus, thereby allowing substrate entry and access to the site of proteolysis. Thus, the C-termini of the proteasomal ATPase may function like a 'key in a lock' to induce gate opening and therefore regulate proteolysis. This chain is Proteasome-associated ATPase, found in Mycobacterium bovis (strain BCG / Pasteur 1173P2).